The chain runs to 407 residues: Probable acyl-CoA dehydrogenase FadE2 (407 aa).

The protein belongs to the acyl-CoA dehydrogenase family. It depends on FAD as a cofactor.

The catalysed reaction is a 2,3-saturated acyl-CoA + A = a 2,3-dehydroacyl-CoA + AH2. The polypeptide is Probable acyl-CoA dehydrogenase FadE2 (Mycobacterium tuberculosis (strain ATCC 25618 / H37Rv)).